The following is a 357-amino-acid chain: Phosphoserine aminotransferase (357 aa).

An L-glutamate-binding site is contributed by Arg41. Pyridoxal 5'-phosphate contacts are provided by residues 76–77, Trp102, Thr152, Asp171, and Gln194; that span reads GT. The residue at position 195 (Lys195) is an N6-(pyridoxal phosphate)lysine. 235–236 provides a ligand contact to pyridoxal 5'-phosphate; that stretch reads NT.

This sequence belongs to the class-V pyridoxal-phosphate-dependent aminotransferase family. SerC subfamily. Homodimer. Requires pyridoxal 5'-phosphate as cofactor.

It localises to the cytoplasm. The enzyme catalyses O-phospho-L-serine + 2-oxoglutarate = 3-phosphooxypyruvate + L-glutamate. It catalyses the reaction 4-(phosphooxy)-L-threonine + 2-oxoglutarate = (R)-3-hydroxy-2-oxo-4-phosphooxybutanoate + L-glutamate. Its pathway is amino-acid biosynthesis; L-serine biosynthesis; L-serine from 3-phospho-D-glycerate: step 2/3. Functionally, catalyzes the reversible conversion of 3-phosphohydroxypyruvate to phosphoserine and of 3-hydroxy-2-oxo-4-phosphonooxybutanoate to phosphohydroxythreonine. The protein is Phosphoserine aminotransferase of Limosilactobacillus fermentum (strain NBRC 3956 / LMG 18251) (Lactobacillus fermentum).